We begin with the raw amino-acid sequence, 91 residues long: Small ribosomal subunit protein uS19 (91 aa).

The protein belongs to the universal ribosomal protein uS19 family.

In terms of biological role, protein S19 forms a complex with S13 that binds strongly to the 16S ribosomal RNA. In Fusobacterium nucleatum subsp. nucleatum (strain ATCC 25586 / DSM 15643 / BCRC 10681 / CIP 101130 / JCM 8532 / KCTC 2640 / LMG 13131 / VPI 4355), this protein is Small ribosomal subunit protein uS19.